A 106-amino-acid chain; its full sequence is Pyrimidine/purine nucleoside phosphorylase (106 aa).

The protein belongs to the nucleoside phosphorylase PpnP family.

It catalyses the reaction a purine D-ribonucleoside + phosphate = a purine nucleobase + alpha-D-ribose 1-phosphate. The catalysed reaction is adenosine + phosphate = alpha-D-ribose 1-phosphate + adenine. It carries out the reaction cytidine + phosphate = cytosine + alpha-D-ribose 1-phosphate. The enzyme catalyses guanosine + phosphate = alpha-D-ribose 1-phosphate + guanine. It catalyses the reaction inosine + phosphate = alpha-D-ribose 1-phosphate + hypoxanthine. The catalysed reaction is thymidine + phosphate = 2-deoxy-alpha-D-ribose 1-phosphate + thymine. It carries out the reaction uridine + phosphate = alpha-D-ribose 1-phosphate + uracil. The enzyme catalyses xanthosine + phosphate = alpha-D-ribose 1-phosphate + xanthine. Its function is as follows. Catalyzes the phosphorolysis of diverse nucleosides, yielding D-ribose 1-phosphate and the respective free bases. Can use uridine, adenosine, guanosine, cytidine, thymidine, inosine and xanthosine as substrates. Also catalyzes the reverse reactions. This chain is Pyrimidine/purine nucleoside phosphorylase, found in Burkholderia cenocepacia (strain ATCC BAA-245 / DSM 16553 / LMG 16656 / NCTC 13227 / J2315 / CF5610) (Burkholderia cepacia (strain J2315)).